Reading from the N-terminus, the 955-residue chain is Aminopeptidase A (955 aa).

Residues 1-17 (MDIEDKSSKMHCMKGKH) are Cytoplasmic-facing. The helical; Signal-anchor for type II membrane protein transmembrane segment at 18–38 (VAIICGVVIAVGLILGLGLGL) threads the bilayer. Residues 39–955 (GLKPEACNPP…LENSEQPNFV (917 aa)) lie on the Extracellular side of the membrane. The tract at residues 49–69 (EDNGLLSTKPPTTSTPNVTNP) is disordered. Residues 55 to 69 (STKPPTTSTPNVTNP) show a composition bias toward low complexity. N-linked (GlcNAc...) asparagine glycosylation is found at asparagine 65, asparagine 118, and asparagine 192. A substrate-binding site is contributed by glutamate 218. Asparagine 312, asparagine 319, and asparagine 335 each carry an N-linked (GlcNAc...) asparagine glycan. 352–356 (GAMEN) contributes to the substrate binding site. Histidine 388 contacts Zn(2+). The active-site Proton acceptor is glutamate 389. Zn(2+)-binding residues include histidine 392 and glutamate 411. 11 N-linked (GlcNAc...) asparagine glycosylation sites follow: asparagine 458, asparagine 547, asparagine 584, asparagine 592, asparagine 647, asparagine 674, asparagine 681, asparagine 759, asparagine 766, asparagine 823, and asparagine 836. Arginine 882 provides a ligand contact to substrate.

It belongs to the peptidase M1 family. Homodimer; disulfide-linked. Zn(2+) is required as a cofactor.

It is found in the cell membrane. The enzyme catalyses Release of N-terminal glutamate (and to a lesser extent aspartate) from a peptide.. The partially purified protein is inhibited by the aminopeptidase competitive inhibitors amastatin (Leu and acidic inhibitor), and bestatin (Leu inhibitor), by chelating agents EDTA, and 1,10-Phenanthroline, as well as by Zn(2+) ions. Substrate specificity is modulated by Ca(2+), Ba(2+), and Mn(2+) ions which enhances the enzymatic activity for cleavage of acidic residues. Its function is as follows. Venom protein that cleaves N-terminal acidic residues from peptides with high potency in presence of calcium. It may have several roles in venom including alteration of blood pressure by cleaving circulating angiotensin-2, general degradation of host tissue, increase of permeability to other venom components, and/or processing of other toxins in the venom. The polypeptide is Aminopeptidase A (Gloydius brevicauda (Korean slamosa snake)).